We begin with the raw amino-acid sequence, 495 residues long: UDP-N-acetylmuramoyl-L-alanyl-D-glutamate--2,6-diaminopimelate ligase (495 aa).

UDP-N-acetyl-alpha-D-muramoyl-L-alanyl-D-glutamate is bound by residues leucine 27, serine 29, and histidine 44–alanine 46. Residue glycine 116–threonine 122 coordinates ATP. UDP-N-acetyl-alpha-D-muramoyl-L-alanyl-D-glutamate contacts are provided by residues asparagine 157, threonine 158–threonine 159, serine 185, glutamine 191, and arginine 193. Lysine 225 bears the N6-carboxylysine mark. Meso-2,6-diaminopimelate is bound by residues arginine 390, aspartate 414–arginine 417, glycine 465, and glutamate 469. The Meso-diaminopimelate recognition motif signature appears at aspartate 414–arginine 417.

The protein belongs to the MurCDEF family. MurE subfamily. It depends on Mg(2+) as a cofactor. Carboxylation is probably crucial for Mg(2+) binding and, consequently, for the gamma-phosphate positioning of ATP.

Its subcellular location is the cytoplasm. It carries out the reaction UDP-N-acetyl-alpha-D-muramoyl-L-alanyl-D-glutamate + meso-2,6-diaminopimelate + ATP = UDP-N-acetyl-alpha-D-muramoyl-L-alanyl-gamma-D-glutamyl-meso-2,6-diaminopimelate + ADP + phosphate + H(+). The protein operates within cell wall biogenesis; peptidoglycan biosynthesis. Its function is as follows. Catalyzes the addition of meso-diaminopimelic acid to the nucleotide precursor UDP-N-acetylmuramoyl-L-alanyl-D-glutamate (UMAG) in the biosynthesis of bacterial cell-wall peptidoglycan. This is UDP-N-acetylmuramoyl-L-alanyl-D-glutamate--2,6-diaminopimelate ligase from Salmonella typhimurium (strain LT2 / SGSC1412 / ATCC 700720).